A 98-amino-acid chain; its full sequence is Large ribosomal subunit protein bL27 (98 aa).

Residues 1–10 (MELKMNLQLF) constitute a propeptide that is removed on maturation. The interval 11-30 (AQKKGTGSSKNGRDSISKRL) is disordered.

Belongs to the bacterial ribosomal protein bL27 family. The N-terminus is cleaved by ribosomal processing cysteine protease Prp.

This Natranaerobius thermophilus (strain ATCC BAA-1301 / DSM 18059 / JW/NM-WN-LF) protein is Large ribosomal subunit protein bL27.